The chain runs to 108 residues: Large ribosomal subunit protein uL24 (108 aa).

This sequence belongs to the universal ribosomal protein uL24 family. As to quaternary structure, part of the 50S ribosomal subunit.

Its function is as follows. One of two assembly initiator proteins, it binds directly to the 5'-end of the 23S rRNA, where it nucleates assembly of the 50S subunit. Functionally, one of the proteins that surrounds the polypeptide exit tunnel on the outside of the subunit. The protein is Large ribosomal subunit protein uL24 of Geobacter metallireducens (strain ATCC 53774 / DSM 7210 / GS-15).